A 155-amino-acid chain; its full sequence is SsrA-binding protein (155 aa).

It belongs to the SmpB family.

The protein resides in the cytoplasm. Required for rescue of stalled ribosomes mediated by trans-translation. Binds to transfer-messenger RNA (tmRNA), required for stable association of tmRNA with ribosomes. tmRNA and SmpB together mimic tRNA shape, replacing the anticodon stem-loop with SmpB. tmRNA is encoded by the ssrA gene; the 2 termini fold to resemble tRNA(Ala) and it encodes a 'tag peptide', a short internal open reading frame. During trans-translation Ala-aminoacylated tmRNA acts like a tRNA, entering the A-site of stalled ribosomes, displacing the stalled mRNA. The ribosome then switches to translate the ORF on the tmRNA; the nascent peptide is terminated with the 'tag peptide' encoded by the tmRNA and targeted for degradation. The ribosome is freed to recommence translation, which seems to be the essential function of trans-translation. This is SsrA-binding protein from Halothermothrix orenii (strain H 168 / OCM 544 / DSM 9562).